The sequence spans 449 residues: N-succinylarginine dihydrolase (449 aa).

Substrate contacts are provided by residues 19 to 28, N110, and 137 to 138; these read GGLSYGNVAS and HR. The interval 23-43 is disordered; sequence YGNVASQSNSQQASNPREAAR. The segment covering 27–37 has biased composition (low complexity); that stretch reads ASQSNSQQASN. E174 is a catalytic residue. Position 214 (R214) interacts with substrate. Residue H250 is part of the active site. Residues D252 and N365 each contribute to the substrate site. C371 serves as the catalytic Nucleophile.

Belongs to the succinylarginine dihydrolase family. Homodimer.

The catalysed reaction is N(2)-succinyl-L-arginine + 2 H2O + 2 H(+) = N(2)-succinyl-L-ornithine + 2 NH4(+) + CO2. It participates in amino-acid degradation; L-arginine degradation via AST pathway; L-glutamate and succinate from L-arginine: step 2/5. Catalyzes the hydrolysis of N(2)-succinylarginine into N(2)-succinylornithine, ammonia and CO(2). This chain is N-succinylarginine dihydrolase, found in Pseudomonas putida (strain ATCC 47054 / DSM 6125 / CFBP 8728 / NCIMB 11950 / KT2440).